The primary structure comprises 296 residues: Tyrosine recombinase XerC (296 aa).

Positions 1 to 84 constitute a Core-binding (CB) domain; sequence MNKIQESFLY…TLRSFYEFWM (84 aa). The Tyr recombinase domain occupies 105–286; that stretch reads YLPHFFYEEE…SNQQLRKVYL (182 aa). Catalysis depends on residues arginine 145, lysine 169, histidine 238, arginine 241, and histidine 264. The active-site O-(3'-phospho-DNA)-tyrosine intermediate is the tyrosine 273.

It belongs to the 'phage' integrase family. XerC subfamily. In terms of assembly, forms a cyclic heterotetrameric complex composed of two molecules of XerC and two molecules of XerD.

The protein resides in the cytoplasm. Its function is as follows. Site-specific tyrosine recombinase, which acts by catalyzing the cutting and rejoining of the recombining DNA molecules. The XerC-XerD complex is essential to convert dimers of the bacterial chromosome into monomers to permit their segregation at cell division. It also contributes to the segregational stability of plasmids. The protein is Tyrosine recombinase XerC of Staphylococcus carnosus (strain TM300).